The chain runs to 64 residues: uncharacterized protein (64 aa).

The tract at residues 1 to 64 is disordered; sequence MMITRGWEGW…LDPAISRSSS (64 aa). Gly residues predominate over residues 16-28; that stretch reads RGAGTGTGLGGPG.

This is an uncharacterized protein from Homo sapiens (Human).